A 641-amino-acid chain; its full sequence is Methionine--tRNA ligase (641 aa).

Positions 13 to 23 match the 'HIGH' region motif; it reads YYPSAKLHIGN. Positions 128, 131, 145, and 148 each coordinate Zn(2+). Positions 298–302 match the 'KMSKS' region motif; that stretch reads KMSKS. Lys301 serves as a coordination point for ATP. One can recognise a tRNA-binding domain in the interval 539-641; that stretch reads DFDKIDLRVV…GELPTGSQVR (103 aa).

The protein belongs to the class-I aminoacyl-tRNA synthetase family. MetG type 2A subfamily. Homodimer. Zn(2+) is required as a cofactor.

It localises to the cytoplasm. The catalysed reaction is tRNA(Met) + L-methionine + ATP = L-methionyl-tRNA(Met) + AMP + diphosphate. Its function is as follows. Is required not only for elongation of protein synthesis but also for the initiation of all mRNA translation through initiator tRNA(fMet) aminoacylation. This chain is Methionine--tRNA ligase, found in Clostridium tetani (strain Massachusetts / E88).